Consider the following 180-residue polypeptide: NADH-quinone oxidoreductase subunit I (180 aa).

2 consecutive 4Fe-4S ferredoxin-type domains span residues 48–80 (IVLTRDPDGDERCVACNLCAVACPVGCISLQKS) and 90–119 (EFFRINFSRCIFCGLCEEACPTTAIQLTPD). Positions 60, 63, 66, 70, 99, 102, 105, and 109 each coordinate [4Fe-4S] cluster. Residues 161–174 (KPKGDAENEAKPID) are compositionally biased toward basic and acidic residues. The interval 161–180 (KPKGDAENEAKPIDVKSLLP) is disordered.

The protein belongs to the complex I 23 kDa subunit family. In terms of assembly, NDH-1 is composed of 14 different subunits. Subunits NuoA, H, J, K, L, M, N constitute the membrane sector of the complex. Requires [4Fe-4S] cluster as cofactor.

The protein localises to the cell inner membrane. The enzyme catalyses a quinone + NADH + 5 H(+)(in) = a quinol + NAD(+) + 4 H(+)(out). In terms of biological role, NDH-1 shuttles electrons from NADH, via FMN and iron-sulfur (Fe-S) centers, to quinones in the respiratory chain. The immediate electron acceptor for the enzyme in this species is believed to be ubiquinone. Couples the redox reaction to proton translocation (for every two electrons transferred, four hydrogen ions are translocated across the cytoplasmic membrane), and thus conserves the redox energy in a proton gradient. The chain is NADH-quinone oxidoreductase subunit I from Aeromonas hydrophila subsp. hydrophila (strain ATCC 7966 / DSM 30187 / BCRC 13018 / CCUG 14551 / JCM 1027 / KCTC 2358 / NCIMB 9240 / NCTC 8049).